We begin with the raw amino-acid sequence, 374 residues long: S-adenosylmethionine:tRNA ribosyltransferase-isomerase (374 aa).

This sequence belongs to the QueA family. As to quaternary structure, monomer.

The protein resides in the cytoplasm. It catalyses the reaction 7-aminomethyl-7-carbaguanosine(34) in tRNA + S-adenosyl-L-methionine = epoxyqueuosine(34) in tRNA + adenine + L-methionine + 2 H(+). It participates in tRNA modification; tRNA-queuosine biosynthesis. Functionally, transfers and isomerizes the ribose moiety from AdoMet to the 7-aminomethyl group of 7-deazaguanine (preQ1-tRNA) to give epoxyqueuosine (oQ-tRNA). This chain is S-adenosylmethionine:tRNA ribosyltransferase-isomerase, found in Prochlorococcus marinus (strain MIT 9301).